The sequence spans 121 residues: Protein ripply2.1 (121 aa).

Residues 1–69 (MEPNQQRSCG…DKGKPPSFQH (69 aa)) form a disordered region. Positions 29–32 (WRPW) match the WRPW motif motif. Positions 39–57 (HVQNPPTAQQQFYSDNQSH) are enriched in polar residues. The segment at 69-104 (HPVKLFWPKSRCYDFMYQEAEELLRHFPVQATISLY) is ripply homology domain.

This sequence belongs to the ripply family. In terms of tissue distribution, expressed in the presomitic mesoderm (PSM) in the anterior halves of somitomeres S-0, S-I and S-II and in the newly formed somites.

The protein resides in the nucleus. Functionally, required during somitogenesis to regulate somite differentiation and the positioning of the presomitic mesoderm-front. Represses the expression of genes involved in somite segmentation by acting with the corepressor tle4 to down-regulate the transcriptional activity of tbx6. Also regulates retinoic acid signaling during somitogenesis and is necessary for the expression of aldh1a2/raldh2. This is Protein ripply2.1 (ripply2.1) from Xenopus laevis (African clawed frog).